The primary structure comprises 84 residues: Large ribosomal subunit protein bL27 (84 aa).

Residues 1–22 (MAHKKAGGSTRNGRDSESKRLG) form a disordered region.

It belongs to the bacterial ribosomal protein bL27 family.

In Shewanella oneidensis (strain ATCC 700550 / JCM 31522 / CIP 106686 / LMG 19005 / NCIMB 14063 / MR-1), this protein is Large ribosomal subunit protein bL27.